The following is a 406-amino-acid chain: MIFSVDKVRADFPVLSREVNGLPLAYLDSAASAQKPSQVIDAEAEFYRHGYAAVHRGIHTLSAQATEKMENVRKRASLFINARSAEELVFVRGTTEGINLVANSWGNSNVRAGDNIIISQMEHHANIVPWQMLCARVGAELRVIPLNPDGTLQLETLPTLFDEKTRLLAITHVSNVLGTENPLAEMITLAHQHGAKVLVDGAQAVMHHPVDVQALDCDFYVFSGHKLYGPTGIGILYVKEALLQEMPPWEGGGSMIATVSLSEGTTWTKAPWRFEAGTPNTGGIIGLGAALEYVSALGLNNIAEYEQNLMHYALSQLESVPDLTLYGPQNRLGVIAFNLGKHHAYDVGSFLDNYGIAVRTGHHCAMPLMAYYNVPAMCRASLAMYNTHEEVDRLVTGLQRIHRLLG.

Lys226 bears the N6-(pyridoxal phosphate)lysine mark. Catalysis depends on Cys364, which acts as the Cysteine persulfide intermediate.

It belongs to the class-V pyridoxal-phosphate-dependent aminotransferase family. Csd subfamily. Homodimer. Interacts with SufE and the SufBCD complex composed of SufB, SufC and SufD. The interaction with SufE is required to mediate the direct transfer of the sulfur atom from the S-sulfanylcysteine. Pyridoxal 5'-phosphate serves as cofactor.

The protein resides in the cytoplasm. The enzyme catalyses (sulfur carrier)-H + L-cysteine = (sulfur carrier)-SH + L-alanine. It carries out the reaction L-selenocysteine + AH2 = hydrogenselenide + L-alanine + A + H(+). The protein operates within cofactor biosynthesis; iron-sulfur cluster biosynthesis. Cysteine desulfurases mobilize the sulfur from L-cysteine to yield L-alanine, an essential step in sulfur metabolism for biosynthesis of a variety of sulfur-containing biomolecules. Component of the suf operon, which is activated and required under specific conditions such as oxidative stress and iron limitation. Acts as a potent selenocysteine lyase in vitro, that mobilizes selenium from L-selenocysteine. Selenocysteine lyase activity is however unsure in vivo. The sequence is that of Cysteine desulfurase from Escherichia coli (strain K12 / MC4100 / BW2952).